The following is a 70-amino-acid chain: MTTPKNVQVSEKTLEITQIKSTIGGKQNQRDTLRSLGLKRIGHTVVRKADAVTVGMINTIPHLVKVEEAK.

The protein belongs to the universal ribosomal protein uL30 family. In terms of assembly, part of the 50S ribosomal subunit.

The polypeptide is Large ribosomal subunit protein uL30 (Renibacterium salmoninarum (strain ATCC 33209 / DSM 20767 / JCM 11484 / NBRC 15589 / NCIMB 2235)).